A 197-amino-acid chain; its full sequence is Auxin-responsive protein IAA19 (197 aa).

The EAR-like (transcriptional repression) signature appears at 13-17 (LRLGL). Positions 35-47 (MNMTSSGSNSDQC) are enriched in polar residues. Residues 35–67 (MNMTSSGSNSDQCESGVVSSGGDAEKVNDSPAA) form a disordered region. Residues 96–184 (LGYVKVSMDG…KRLRIMKRSD (89 aa)) enclose the PB1 domain.

It belongs to the Aux/IAA family. As to quaternary structure, homodimers and heterodimers. Interacts with the auxin response factor ARF7.

Its subcellular location is the nucleus. In terms of biological role, aux/IAA proteins are short-lived transcriptional factors that function as repressors of early auxin response genes at low auxin concentrations. Repression is thought to result from the interaction with auxin response factors (ARFs), proteins that bind to the auxin-responsive promoter element (AuxRE). Formation of heterodimers with ARF proteins may alter their ability to modulate early auxin response genes expression. This is Auxin-responsive protein IAA19 (IAA19) from Arabidopsis thaliana (Mouse-ear cress).